The chain runs to 650 residues: Glycoprotein 105 (650 aa).

A helical; Signal-anchor for type II membrane protein transmembrane segment spans residues 1–32 (MATARLGVMRPPRSCALIFLCAFSMATAPTNA). Residues 33–650 (TAHRRAGTVK…RFPHVGIGSY (618 aa)) are Virion surface-facing. Asparagine 52, asparagine 290, asparagine 332, asparagine 338, asparagine 359, asparagine 422, asparagine 516, and asparagine 552 each carry an N-linked (GlcNAc...) asparagine; by host glycan.

In terms of assembly, associates with the gp82-gp105 complex. In terms of processing, N-Glycosylated.

The protein localises to the virion membrane. The protein is Glycoprotein 105 (U96/U97/U98/U99/U100) of Homo sapiens (Human).